Consider the following 1071-residue polypeptide: Serine/threonine-protein phosphatase 6 regulatory ankyrin repeat subunit C (1071 aa).

28 ANK repeats span residues 7-36, 40-69, 73-102, 106-135, 139-168, 172-201, 205-234, 238-267, 271-301, 305-334, 338-367, 371-400, 422-451, 455-484, 488-539, 543-573, 578-607, 611-640, 645-674, 681-710, 714-743, 747-776, 784-814, 816-845, 852-881, 885-915, 919-951, and 955-984; these read SDQP…EVNA, ERRT…NVNA, VWLT…DVTA, YWQT…SLNM, TGRA…NLSA, KDRQ…DKSC, RGYT…EIDE, FGNT…NVNQ, RGYT…DVNM, EGKS…EIDC, YGNT…DTAR, HGMF…LYSI, FGRT…DMNK, FGRT…EVNE, SGCT…DPCL, KGYS…TLGD, GSIS…CVDV, VGRS…SCLL, SKWG…GADL, EGQT…CPDM, RGRT…SVLS, QGRS…HSQP, HGYT…SIQE, NPFT…CNSL, KGRT…DIDA, SGRS…DLSL, NKNT…LINA, and MLQM…TVLA.

In terms of assembly, protein phosphatase 6 (PP6) holoenzyme is proposed to be a heterotrimeric complex formed by the catalytic subunit, a SAPS domain-containing subunit (PP6R) and an ankyrin repeat-domain containing regulatory subunit (ARS).

In terms of biological role, putative regulatory subunit of protein phosphatase 6 (PP6) that may be involved in the recognition of phosphoprotein substrates. The polypeptide is Serine/threonine-protein phosphatase 6 regulatory ankyrin repeat subunit C (ankrd52) (Danio rerio (Zebrafish)).